Here is an 864-residue protein sequence, read N- to C-terminus: Protein translocase subunit SecA (864 aa).

ATP contacts are provided by residues glutamine 85, 103 to 107, and aspartate 542; that span reads GEGKT.

This sequence belongs to the SecA family. As to quaternary structure, monomer and homodimer. Part of the essential Sec protein translocation apparatus which comprises SecA, SecYEG and auxiliary proteins SecDF. Other proteins may also be involved.

It is found in the cell inner membrane. Its subcellular location is the cytoplasm. The catalysed reaction is ATP + H2O + cellular proteinSide 1 = ADP + phosphate + cellular proteinSide 2.. In terms of biological role, part of the Sec protein translocase complex. Interacts with the SecYEG preprotein conducting channel. Has a central role in coupling the hydrolysis of ATP to the transfer of proteins into and across the cell membrane, serving as an ATP-driven molecular motor driving the stepwise translocation of polypeptide chains across the membrane. The protein is Protein translocase subunit SecA of Fervidobacterium nodosum (strain ATCC 35602 / DSM 5306 / Rt17-B1).